The sequence spans 275 residues: Dolichyl-diphosphooligosaccharide--protein glycosyltransferase subunit delta (275 aa).

The N-terminal stretch at 1–18 is a signal peptide; that stretch reads MKTSVFIAIFNLLVCALA. Helical transmembrane passes span 179-199, 214-234, and 241-261; these read VFII…VGFI, VQLL…LNFV, and SIFT…YFGV.

The protein belongs to the SWP1 family. As to quaternary structure, component of the oligosaccharyltransferase (OST) complex.

It localises to the endoplasmic reticulum membrane. The protein operates within protein modification; protein glycosylation. Functionally, subunit of the oligosaccharyl transferase (OST) complex that catalyzes the initial transfer of a defined glycan (Glc(3)Man(9)GlcNAc(2) in eukaryotes) from the lipid carrier dolichol-pyrophosphate to an asparagine residue within an Asn-X-Ser/Thr consensus motif in nascent polypeptide chains, the first step in protein N-glycosylation. N-glycosylation occurs cotranslationally and the complex associates with the Sec61 complex at the channel-forming translocon complex that mediates protein translocation across the endoplasmic reticulum (ER). All subunits are required for a maximal enzyme activity. Plays a role in cell wall integrity and in engulfment by macrophages. This Candida albicans (strain SC5314 / ATCC MYA-2876) (Yeast) protein is Dolichyl-diphosphooligosaccharide--protein glycosyltransferase subunit delta.